The chain runs to 149 residues: Small ribosomal subunit protein bS18c (149 aa).

The tract at residues methionine 1 to glutamine 23 is disordered.

This sequence belongs to the bacterial ribosomal protein bS18 family. Part of the 30S ribosomal subunit.

It localises to the plastid. This chain is Small ribosomal subunit protein bS18c, found in Cuscuta obtusiflora (Peruvian dodder).